The sequence spans 280 residues: 2-dehydro-3-deoxyphosphooctonate aldolase (280 aa).

It belongs to the KdsA family.

It localises to the cytoplasm. It catalyses the reaction D-arabinose 5-phosphate + phosphoenolpyruvate + H2O = 3-deoxy-alpha-D-manno-2-octulosonate-8-phosphate + phosphate. It functions in the pathway carbohydrate biosynthesis; 3-deoxy-D-manno-octulosonate biosynthesis; 3-deoxy-D-manno-octulosonate from D-ribulose 5-phosphate: step 2/3. The protein operates within bacterial outer membrane biogenesis; lipopolysaccharide biosynthesis. This Thioalkalivibrio sulfidiphilus (strain HL-EbGR7) protein is 2-dehydro-3-deoxyphosphooctonate aldolase.